A 219-amino-acid chain; its full sequence is Guanylate kinase (219 aa).

Residues 15 to 194 enclose the Guanylate kinase-like domain; the sequence is GLMFVLSSPS…AFAEVQSILK (180 aa). 22–29 contributes to the ATP binding site; that stretch reads SPSGAGKT.

This sequence belongs to the guanylate kinase family.

Its subcellular location is the cytoplasm. The enzyme catalyses GMP + ATP = GDP + ADP. Essential for recycling GMP and indirectly, cGMP. This is Guanylate kinase from Nitrobacter winogradskyi (strain ATCC 25391 / DSM 10237 / CIP 104748 / NCIMB 11846 / Nb-255).